Here is a 533-residue protein sequence, read N- to C-terminus: Portal protein B (533 aa).

It belongs to the siphoviridae portal protein family. In terms of assembly, homododecamer. Interacts with the terminase complex composed of two small and one large terminase subunits. Proteolytically cleaved by the viral protease during capsid maturation.

Its subcellular location is the virion. Its function is as follows. Forms the portal vertex of the capsid. This portal plays critical roles in head assembly, genome packaging, neck/tail attachment, and genome ejection. The portal protein multimerizes as a single ring-shaped homododecamer arranged around a central channel. Binds to the terminase subunits to form the packaging machine. The chain is Portal protein B from Escherichia phage lambda (Bacteriophage lambda).